We begin with the raw amino-acid sequence, 960 residues long: Dynamin-like GTPase OPA1, mitochondrial (960 aa).

The N-terminal 87 residues, 1–87 (MWRAGRAAVA…IKYGYQPRRN (87 aa)), are a transit peptide targeting the mitochondrion. Over 88-96 (FWPARLAAR) the chain is Mitochondrial matrix. Residues 97–113 (LLKLRYIILGSAVGGGY) form a helical membrane-spanning segment. At 114-770 (TAKKTFDEWK…NAIENMIGPD (657 aa)) the chain is on the mitochondrial intermembrane side. The stretch at 210 to 254 (SDKEKIDQLQEELLHTQLKYQRILERLEKENKELRKLVLQKDDKG) forms a coiled coil. The LQQQIQ motif signature appears at 217–222 (QLQEEL). An N6-acetyllysine modification is found at K228. In terms of domain architecture, Dynamin-type G spans 285 to 561 (QDHLPRVVVV…FWKMVRESVE (277 aa)). Residues 295–302 (GDQSAGKT) are G1 motif. GTP contacts are provided by S298, G300, K301, T302, S303, and G317. Mg(2+) is bound at residue T302. The tract at residues 321–324 (MMTR) is G2 motif. Residues T323 and D398 each contribute to the Mg(2+) site. Positions 398 to 401 (DLPG) are G3 motif. A G4 motif region spans residues 467 to 470 (TKVD). 3 residues coordinate GTP: K468, D470, and T503. The interval 501–504 (VVTG) is G5 motif. Stalk region regions lie at residues 589 to 836 (DRNE…IKDT) and 874 to 928 (CNDV…VKLL). A paddle region region spans residues 736–856 (SDKQQWDAAI…KTALNHCNLC (121 aa)). An intramembrane segment occupies 771 to 781 (WKKRWMYWKNR). Over 782–960 (TQEQCVHNET…AFIEALHQEK (179 aa)) the chain is Mitochondrial intermembrane. C856 and C874 are disulfide-bonded. Residues 895–960 (RQQLTNTEVR…AFIEALHQEK (66 aa)) adopt a coiled-coil conformation.

The protein belongs to the TRAFAC class dynamin-like GTPase superfamily. Dynamin/Fzo/YdjA family. Oligomeric complex consisting of membrane-bound and soluble forms of OPA1. Interacts with RCC1L; RCC1L acts as a guanine nucleotide exchange factor (GEF) for OPA1 by exchanging bound GDP for free GTP. Interacts with CHCHD3 and IMMT; these interactions occur preferentially with soluble OPA1 forms. Interacts with PRELID1. Cleaved by OMA1 or YME1L downstream of the transmembrane region in response to different signals to generate soluble forms. Cleaved by OMA1 at position S1 following stress conditions, generating the short soluble form (Dynamin-like GTPase OPA1, short form; S-OPA1). AFG3L2 is involved in the regulation of OMA1-dependent processing of OPA1. PARL-dependent proteolytic processing releases an antiapoptotic soluble form not required for mitochondrial fusion. Post-translationally, cleavage at position S2 by YME1L is required to mediate oxidative phosphorylation (OXPHOS)-induced mitochondrial fusion. Cleavage occurs in the sequence motif Leu-Gln-Gln-Gln-Ile-Gln (LQQQIQ). In terms of processing, cleavage at position S3 by YME1L is required for membrane tubulation. Detected in brain (at protein level). Detected in brain, brain stem, heart, kidney, liver and skeletal muscle.

It is found in the mitochondrion inner membrane. The protein resides in the mitochondrion intermembrane space. The catalysed reaction is GTP + H2O = GDP + phosphate + H(+). Its activity is regulated as follows. Activated by guanine nucleotide exchange factor RCC1L. Its function is as follows. Dynamin-related GTPase that is essential for normal mitochondrial morphology by mediating fusion of the mitochondrial inner membranes, regulating cristae morphology and maintaining respiratory chain function. Exists in two forms: the transmembrane, long form (Dynamin-like GTPase OPA1, long form; L-OPA1), which is tethered to the inner mitochondrial membrane, and the short soluble form (Dynamin-like GTPase OPA1, short form; S-OPA1), which results from proteolytic cleavage and localizes in the intermembrane space. Both forms (L-OPA1 and S-OPA1) cooperate to catalyze the fusion of the mitochondrial inner membrane. The equilibrium between L-OPA1 and S-OPA1 is essential: excess levels of S-OPA1, produced by cleavage by OMA1 following loss of mitochondrial membrane potential, lead to an impaired equilibrium between L-OPA1 and S-OPA1, inhibiting mitochondrial fusion. The balance between L-OPA1 and S-OPA1 also influences cristae shape and morphology. Involved in remodeling cristae and the release of cytochrome c during apoptosis. Proteolytic processing by PARL in response to intrinsic apoptotic signals may lead to disassembly of OPA1 oligomers and release of the caspase activator cytochrome C (CYCS) into the mitochondrial intermembrane space. Acts as a regulator of T-helper Th17 cells, which are characterized by cells with fused mitochondria with tight cristae, by mediating mitochondrial membrane remodeling: OPA1 is required for interleukin-17 (IL-17) production. Its role in mitochondrial morphology is required for mitochondrial genome maintenance. Functionally, constitutes the transmembrane long form (L-OPA1) that plays a central role in mitochondrial inner membrane fusion and cristae morphology. L-OPA1 and the soluble short form (S-OPA1) form higher-order helical assemblies that coordinate the fusion of mitochondrial inner membranes. Inner membrane-anchored L-OPA1 molecules initiate membrane remodeling by recruiting soluble S-OPA1 to rapidly polymerize into a flexible cylindrical scaffold encaging the mitochondrial inner membrane. Once at the membrane surface, the formation of S-OPA1 helices induce bilayer curvature. OPA1 dimerization through the paddle region, which inserts into cardiolipin-containing membrane, promotes GTP hydrolysis and the helical assembly of a flexible OPA1 lattice on the membrane, which drives membrane curvature and mitochondrial fusion. Plays a role in the maintenance and remodeling of mitochondrial cristae, some invaginations of the mitochondrial inner membrane that provide an increase in the surface area. Probably acts by forming helical filaments at the inside of inner membrane tubes with the shape and dimensions of crista junctions. The equilibrium between L-OPA1 and S-OPA1 influences cristae shape and morphology: increased L-OPA1 levels promote cristae stacking and elongated mitochondria, while increased S-OPA1 levels correlated with irregular cristae packing and round mitochondria shape. In terms of biological role, constitutes the soluble short form (S-OPA1) generated by cleavage by OMA1, which plays a central role in mitochondrial inner membrane fusion and cristae morphology. The transmembrane long form (L-OPA1) and the S-OPA1 form higher-order helical assemblies that coordinate the fusion of mitochondrial inner membranes. Inner membrane-anchored L-OPA1 molecules initiate membrane remodeling by recruiting soluble S-OPA1 to rapidly polymerize into a flexible cylindrical scaffold encaging the mitochondrial inner membrane. Once at the membrane surface, the formation of S-OPA1 helices induce bilayer curvature. OPA1 dimerization through the paddle region, which inserts into cardiolipin-containing membrane, promotes GTP hydrolysis and the helical assembly of a flexible OPA1 lattice on the membrane, which drives membrane curvature and mitochondrial fusion. Excess levels of S-OPA1 produced by cleavage by OMA1 following stress conditions that induce loss of mitochondrial membrane potential, lead to an impaired equilibrium between L-OPA1 and S-OPA1, thereby inhibiting mitochondrial fusion. Involved in mitochondrial safeguard in response to transient mitochondrial membrane depolarization by mediating flickering: cleavage by OMA1 leads to excess production of S-OPA1, preventing mitochondrial hyperfusion. Plays a role in the maintenance and remodeling of mitochondrial cristae, some invaginations of the mitochondrial inner membrane that provide an increase in the surface area. Probably acts by forming helical filaments at the inside of inner membrane tubes with the shape and dimensions of crista junctions. The equilibrium between L-OPA1 and S-OPA1 influences cristae shape and morphology: increased L-OPA1 levels promote cristae stacking and elongated mitochondria, while increased S-OPA1 levels correlated with irregular cristae packing and round mitochondria shape. Isoforms that contain the alternative exon 4b are required for mitochondrial genome maintenance, possibly by anchoring the mitochondrial nucleoids to the inner mitochondrial membrane. The sequence is that of Dynamin-like GTPase OPA1, mitochondrial from Mus musculus (Mouse).